Consider the following 1184-residue polypeptide: DNA-directed RNA polymerase subunit beta' (1184 aa).

4 residues coordinate Zn(2+): cysteine 60, cysteine 62, cysteine 75, and cysteine 78. Residues aspartate 449, aspartate 451, and aspartate 453 each coordinate Mg(2+). Zn(2+) is bound by residues cysteine 794, cysteine 867, cysteine 874, and cysteine 877. Positions 1165–1184 (NDQQERQDKEKEETEVKASN) are disordered.

Belongs to the RNA polymerase beta' chain family. As to quaternary structure, the RNAP catalytic core consists of 2 alpha, 1 beta, 1 beta' and 1 omega subunit. When a sigma factor is associated with the core the holoenzyme is formed, which can initiate transcription. The cofactor is Mg(2+). Zn(2+) serves as cofactor.

It carries out the reaction RNA(n) + a ribonucleoside 5'-triphosphate = RNA(n+1) + diphosphate. In terms of biological role, DNA-dependent RNA polymerase catalyzes the transcription of DNA into RNA using the four ribonucleoside triphosphates as substrates. The protein is DNA-directed RNA polymerase subunit beta' of Thermoanaerobacter pseudethanolicus (strain ATCC 33223 / 39E) (Clostridium thermohydrosulfuricum).